A 324-amino-acid polypeptide reads, in one-letter code: Probable WRKY transcription factor 53 (324 aa).

A disordered region spans residues 93–126; sequence NPGSVPESPASINGSPRSEEFADGGGSSESHHRQ. A DNA-binding region (WRKY) is located at residues 152–220; it reads GLEGPQDDVF…YRGTHTCSQA (69 aa).

It belongs to the WRKY group III family. In terms of assembly, interacts with ESR/ESP and UPL5. Binds to WRKY30. In terms of processing, ubiquitinated by UPL5. Ubiquitination leads to its subsequent degradation, thus controlling the timing of leaf senescence.

Its subcellular location is the nucleus. In terms of biological role, transcription factor. Interacts specifically with the W box (5'-(T)TGAC[CT]-3'), a frequently occurring elicitor-responsive cis-acting element. May regulate the early events of leaf senescence. Negatively regulates the expression of ESR/ESP. Together with WRKY46 and WRKY70, promotes resistance to P.syringae, probably by enhancing salicylic acid (SA)- dependent genes. Contributes to the suppression of jasmonic acid (MeJA)-induced expression of PDF1.2. The sequence is that of Probable WRKY transcription factor 53 from Arabidopsis thaliana (Mouse-ear cress).